Here is a 284-residue protein sequence, read N- to C-terminus: Sulfotransferase 4A1 (284 aa).

Thr-8, Thr-11, and Thr-205 each carry phosphothreonine.

The protein belongs to the sulfotransferase 1 family. As to expression, expressed in brain, cerebellum and hypothalamus. Not detected in pancreas, liver, lung, intestine, kidney, uterus, adrenal gland, thymus, spleen, epididymis, testicle, and heart.

The protein localises to the cytoplasm. Its function is as follows. Atypical sulfotransferase family member with very low affinity for 3'-phospho-5'-adenylyl sulfate (PAPS) and very low catalytic activity towards L-triiodothyronine, thyroxine, estrone, p-nitrophenol, 2-naphthylamine, and 2-beta-naphthol. May have a role in the metabolism of drugs and neurotransmitters in the CNS. This chain is Sulfotransferase 4A1 (Sult4a1), found in Mus musculus (Mouse).